The sequence spans 135 residues: Small ribosomal subunit protein uS12 (135 aa).

Asp-89 carries the 3-methylthioaspartic acid modification. The tract at residues 108–135 is disordered; it reads NKRTVSRSKYGTKKAKATDKKATDSKKK. The segment covering 111 to 122 has biased composition (basic residues); that stretch reads TVSRSKYGTKKA. Basic and acidic residues predominate over residues 123–135; sequence KATDKKATDSKKK.

Belongs to the universal ribosomal protein uS12 family. In terms of assembly, part of the 30S ribosomal subunit. Contacts proteins S8 and S17. May interact with IF1 in the 30S initiation complex.

With S4 and S5 plays an important role in translational accuracy. Functionally, interacts with and stabilizes bases of the 16S rRNA that are involved in tRNA selection in the A site and with the mRNA backbone. Located at the interface of the 30S and 50S subunits, it traverses the body of the 30S subunit contacting proteins on the other side and probably holding the rRNA structure together. The combined cluster of proteins S8, S12 and S17 appears to hold together the shoulder and platform of the 30S subunit. The sequence is that of Small ribosomal subunit protein uS12 from Helicobacter pylori (strain HPAG1).